Here is a 228-residue protein sequence, read N- to C-terminus: L-ornithine N5-acetyltransferase NATA1 (228 aa).

Positions 1–21 (MAPPTAAPEPNTVPETSPTGH) are disordered. In terms of domain architecture, N-acetyltransferase spans 77–227 (VFLLEISPSP…DALQAIDKLN (151 aa)). Acetyl-CoA contacts are provided by residues 153-155 (IFM), 161-166 (RKGFGK), 192-195 (NVNA), and Tyr-199.

It belongs to the acetyltransferase family.

Acetyltransferase that converts ornithine to N5-acetylornithine, which is likely used in plant defense. In Arabidopsis thaliana (Mouse-ear cress), this protein is L-ornithine N5-acetyltransferase NATA1 (NATA1).